The chain runs to 572 residues: Methionine--tRNA ligase (572 aa).

A 'HIGH' region motif is present at residues 11-21; sequence PYINGIKHLGN. Zn(2+)-binding residues include Cys-143, Cys-146, Cys-156, and Cys-159. The 'KMSKS' region signature appears at 346-350; the sequence is QFSTS. ATP is bound at residue Thr-349.

This sequence belongs to the class-I aminoacyl-tRNA synthetase family. MetG type 1 subfamily. As to quaternary structure, monomer. Zn(2+) serves as cofactor.

It is found in the cytoplasm. The catalysed reaction is tRNA(Met) + L-methionine + ATP = L-methionyl-tRNA(Met) + AMP + diphosphate. Its function is as follows. Is required not only for elongation of protein synthesis but also for the initiation of all mRNA translation through initiator tRNA(fMet) aminoacylation. This Cereibacter sphaeroides (strain KD131 / KCTC 12085) (Rhodobacter sphaeroides) protein is Methionine--tRNA ligase.